Consider the following 283-residue polypeptide: Bifunctional protein FolD (283 aa).

Residues 157–159 (GNG) and Ile-224 each bind NADP(+).

The protein belongs to the tetrahydrofolate dehydrogenase/cyclohydrolase family. Homodimer.

It carries out the reaction (6R)-5,10-methylene-5,6,7,8-tetrahydrofolate + NADP(+) = (6R)-5,10-methenyltetrahydrofolate + NADPH. The catalysed reaction is (6R)-5,10-methenyltetrahydrofolate + H2O = (6R)-10-formyltetrahydrofolate + H(+). It participates in one-carbon metabolism; tetrahydrofolate interconversion. Catalyzes the oxidation of 5,10-methylenetetrahydrofolate to 5,10-methenyltetrahydrofolate and then the hydrolysis of 5,10-methenyltetrahydrofolate to 10-formyltetrahydrofolate. This chain is Bifunctional protein FolD, found in Mycoplasmoides gallisepticum (strain R(low / passage 15 / clone 2)) (Mycoplasma gallisepticum).